The primary structure comprises 117 residues: Ribulose bisphosphate carboxylase small subunit 1 (117 aa).

The protein belongs to the RuBisCO small chain family. In terms of assembly, heterohexadecamer of 8 large and 8 small subunits.

Its function is as follows. RuBisCO catalyzes two reactions: the carboxylation of D-ribulose 1,5-bisphosphate, the primary event in carbon dioxide fixation, as well as the oxidative fragmentation of the pentose substrate. Both reactions occur simultaneously and in competition at the same active site. Although the small subunit is not catalytic it is essential for maximal activity. The chain is Ribulose bisphosphate carboxylase small subunit 1 from Hydrogenovibrio marinus.